The following is a 690-amino-acid chain: F-box/LRR-repeat protein 5 (690 aa).

The tract at residues 1–159 is hemerythrin-like; the sequence is MAPFPDEVDV…IKKKVIAQHC (159 aa). Residues His-15, His-57, Glu-58, Glu-61, His-80, His-126, and Glu-130 each contribute to the Fe(3+) site. The F-box domain maps to 202-248; it reads STGITHLPPEVMLSIFSYLNPQELCRCSQVSTKWSQLAKTGSLWKHL. 7 LRR repeats span residues 340 to 364, 365 to 392, 393 to 418, 478 to 507, 575 to 606, 607 to 634, and 635 to 660; these read SSAVSSKMVRQILELCPNLEHLDLT, QTDISDSAFDSWSWLGCCQSLRHLDLSG, CEKITDMALEKISRALGVLTSHQSGF, VWMLDAEDLADIEDAVEWRHRNVESLCVME, TTLPRGKDLIYFGSEKSDQETGRVLLFLSLSG, CYQITDHGLRALTLGGGLPYLEHLNLSG, and CLTVTGAGLQDLVSACPSLNDEYFYY. [2Fe-2S] cluster is bound by residues Cys-661, Cys-675, Cys-685, and Cys-686.

In terms of assembly, part of a SCF (SKP1-cullin-F-box) protein ligase complex. Interacts with ACO1/IRP1, IREB2/IRP2; the interaction depends on the [2Fe-2S] cluster. Interacts with DCTN1/p150-glued. [2Fe-2S] cluster serves as cofactor. Polybiquitinated upon iron and oxygen depletion, leading to its degradation by the proteasome. Ubiquitination is regulated by the hemerythrin-like region that acts as an oxygen and iron sensor. Undergoes constitutive ubiquitin-dependent degradation at the steady state by HERC2. Ubiquitously expressed. Highly expressed in early embryogenesis with expression decreasing as the embryo progresses through development (E11 and E15).

The protein localises to the cytoplasm. Its subcellular location is the perinuclear region. It localises to the nucleus. Its pathway is protein modification; protein ubiquitination. With respect to regulation, an iron-sulfur cluster promotes IRP2 polyubiquitination and degradation in response to both iron and oxygen concentrations. In terms of biological role, component of some SCF (SKP1-cullin-F-box) protein ligase complex that plays a central role in iron homeostasis by promoting the ubiquitination and subsequent degradation of IREB2/IRP2. The C-terminal domain of FBXL5 contains a redox-sensitive [2Fe-2S] cluster that, upon oxidation, promotes binding to IRP2 to effect its oxygen-dependent degradation. Under iron deficiency conditions, the N-terminal hemerythrin-like (Hr) region, which contains a diiron metal center, cannot bind iron and undergoes conformational changes that destabilize the FBXL5 protein and cause its ubiquitination and degradation. When intracellular iron levels start rising, the Hr region is stabilized. Additional increases in iron levels facilitate the assembly and incorporation of a redox active [2Fe-2S] cluster in the C-terminal domain. Only when oxygen level is high enough to maintain the cluster in its oxidized state can FBXL5 recruit IRP2 as a substrate for polyubiquination and degradation. Promotes ubiquitination and subsequent degradation of the dynactin complex component DCTN1. Within the nucleus, promotes the ubiquitination of SNAI1; preventing its interaction with DNA and promoting its degradation. Negatively regulates DNA damage response by mediating the ubiquitin-proteasome degradation of the DNA repair protein NABP2. The sequence is that of F-box/LRR-repeat protein 5 (Fbxl5) from Mus musculus (Mouse).